The sequence spans 340 residues: Ketol-acid reductoisomerase (NADP(+)) (340 aa).

The region spanning 1–182 is the KARI N-terminal Rossmann domain; the sequence is MRVYYDRDCD…GGGRSGIIET (182 aa). Residues 24–27, R48, S51, S53, and 83–86 each bind NADP(+); these read YGSQ and DELQ. The active site involves H108. Residue G134 participates in NADP(+) binding. The 147-residue stretch at 183-329 folds into the KARI C-terminal knotted domain; the sequence is NFRQECETDL…EKLRGMMPWI (147 aa). D191, E195, E227, and E231 together coordinate Mg(2+). Position 252 (S252) interacts with substrate.

It belongs to the ketol-acid reductoisomerase family. Requires Mg(2+) as cofactor.

It carries out the reaction (2R)-2,3-dihydroxy-3-methylbutanoate + NADP(+) = (2S)-2-acetolactate + NADPH + H(+). The enzyme catalyses (2R,3R)-2,3-dihydroxy-3-methylpentanoate + NADP(+) = (S)-2-ethyl-2-hydroxy-3-oxobutanoate + NADPH + H(+). The protein operates within amino-acid biosynthesis; L-isoleucine biosynthesis; L-isoleucine from 2-oxobutanoate: step 2/4. It functions in the pathway amino-acid biosynthesis; L-valine biosynthesis; L-valine from pyruvate: step 2/4. Involved in the biosynthesis of branched-chain amino acids (BCAA). Catalyzes an alkyl-migration followed by a ketol-acid reduction of (S)-2-acetolactate (S2AL) to yield (R)-2,3-dihydroxy-isovalerate. In the isomerase reaction, S2AL is rearranged via a Mg-dependent methyl migration to produce 3-hydroxy-3-methyl-2-ketobutyrate (HMKB). In the reductase reaction, this 2-ketoacid undergoes a metal-dependent reduction by NADPH to yield (R)-2,3-dihydroxy-isovalerate. The sequence is that of Ketol-acid reductoisomerase (NADP(+)) from Cereibacter sphaeroides (strain ATCC 17025 / ATH 2.4.3) (Rhodobacter sphaeroides).